The sequence spans 166 residues: Lutropin subunit beta (166 aa).

The first 21 residues, 1-21 (MGGAQVLLLLTLLGTPLVTHG), serve as a signal peptide directing secretion. 6 cysteine pairs are disulfide-bonded: Cys56–Cys104, Cys70–Cys119, Cys73–Cys157, Cys81–Cys135, Cys85–Cys137, and Cys140–Cys147. Residue Asn60 is glycosylated (N-linked (GlcNAc...) asparagine).

Belongs to the glycoprotein hormones subunit beta family. In terms of assembly, heterodimer of a common alpha chain and a unique beta chain which confers biological specificity to thyrotropin, lutropin, follitropin and gonadotropin.

It localises to the secreted. Promotes spermatogenesis and ovulation by stimulating the testes and ovaries to synthesize steroids. In Coturnix japonica (Japanese quail), this protein is Lutropin subunit beta (LHB).